We begin with the raw amino-acid sequence, 206 residues long: Photosynthetic reaction center cytochrome c-551 (206 aa).

3 helical membrane passes run 10–30 (IALAIGGAVLMGTLFFLVSFL), 49–69 (FMGWFLLIFCASLIIMGLGKM), and 76–96 (KWFLSFPLSIFVIVMVMFFSL). Residues Cys-152, Cys-155, His-156, and Met-182 each contribute to the heme site.

As to quaternary structure, component of the photosynthetic reaction center. The reaction center interacts with the Fenna-Matthews-Olson (FMO, fmoA) complex. Binds 1 heme group per subunit.

The protein localises to the cell inner membrane. Functionally, monoheme cytochrome which is the immediate electron donor to P840 of the photosynthetic reaction center complex. The polypeptide is Photosynthetic reaction center cytochrome c-551 (pscC) (Chlorobaculum parvum (strain DSM 263 / NCIMB 8327) (Chlorobium vibrioforme subsp. thiosulfatophilum)).